Reading from the N-terminus, the 338-residue chain is Phosphate acyltransferase (338 aa).

The protein belongs to the PlsX family. As to quaternary structure, homodimer. Probably interacts with PlsY.

Its subcellular location is the cytoplasm. The enzyme catalyses a fatty acyl-[ACP] + phosphate = an acyl phosphate + holo-[ACP]. The protein operates within lipid metabolism; phospholipid metabolism. Catalyzes the reversible formation of acyl-phosphate (acyl-PO(4)) from acyl-[acyl-carrier-protein] (acyl-ACP). This enzyme utilizes acyl-ACP as fatty acyl donor, but not acyl-CoA. The chain is Phosphate acyltransferase from Mannheimia succiniciproducens (strain KCTC 0769BP / MBEL55E).